The following is a 284-amino-acid chain: Protein phosphatase 1 regulatory subunit 3B (284 aa).

A PP1-binding motif motif is present at residues 61 to 64 (RVSF). Residues 124 to 232 (RNRLQTNHVC…SNKGKNYRIT (109 aa)) enclose the CBM21 domain. Serine 260 carries the post-translational modification Phosphoserine.

In terms of assembly, interacts with glycogen, PPP1CC catalytic subunit of PP1 and PYGL. Associates with glycogen particles. Forms complexes with debranching enzyme, glycogen phosphorylase, glycogen synthase and phosphorylase kinase which is necessary for its regulation of PP1 activity. As to expression, highly expressed in liver. Moderately expressed in kidney, heart, testis, spleen and lung. Weakly expressed in skeletal muscle (at protein level). Expressed predominantly in liver. Expressed moderately in heart. Expressed weakly in lung, kidney, spleen and skeletal muscle.

Functionally, acts as a glycogen-targeting subunit for phosphatase PP1. Facilitates interaction of the PP1 with enzymes of the glycogen metabolism and regulates its activity. Suppresses the rate at which PP1 dephosphorylates (inactivates) glycogen phosphorylase and enhances the rate at which it activates glycogen synthase and therefore limits glycogen breakdown. Its activity is inhibited by PYGL, resulting in inhibition of the glycogen synthase and glycogen phosphorylase phosphatase activities of PP1. Dramatically increases basal and insulin-stimulated glycogen synthesis upon overexpression in hepatocytes. This chain is Protein phosphatase 1 regulatory subunit 3B (Ppp1r3b), found in Rattus norvegicus (Rat).